The primary structure comprises 391 residues: Erythronate-4-phosphate dehydrogenase (391 aa).

Substrate contacts are provided by S45 and T67. 2 residues coordinate NAD(+): D147 and T176. R209 is an active-site residue. An NAD(+)-binding site is contributed by D238. Residue E243 is part of the active site. Residue H260 is the Proton donor of the active site. G263 provides a ligand contact to NAD(+). Y264 is a substrate binding site.

This sequence belongs to the D-isomer specific 2-hydroxyacid dehydrogenase family. PdxB subfamily. In terms of assembly, homodimer.

Its subcellular location is the cytoplasm. The enzyme catalyses 4-phospho-D-erythronate + NAD(+) = (R)-3-hydroxy-2-oxo-4-phosphooxybutanoate + NADH + H(+). The protein operates within cofactor biosynthesis; pyridoxine 5'-phosphate biosynthesis; pyridoxine 5'-phosphate from D-erythrose 4-phosphate: step 2/5. Its function is as follows. Catalyzes the oxidation of erythronate-4-phosphate to 3-hydroxy-2-oxo-4-phosphonooxybutanoate. This is Erythronate-4-phosphate dehydrogenase from Photobacterium profundum (strain SS9).